A 63-amino-acid chain; its full sequence is Synergistic-type venom protein C9S3, chain 2 (63 aa).

3 disulfides stabilise this stretch: Cys3/Cys24, Cys17/Cys42, and Cys46/Cys57.

The protein belongs to the three-finger toxin family. Short-chain subfamily. Aminergic toxin sub-subfamily. Heterodimer of C9S3 chain 1 (AC P01408) and chain 2, linked by at least two disulfide bonds. Expressed by the venom gland.

The protein resides in the secreted. This protein shows a synergetic toxic effect in that it enhances the toxicity of other D.angusticeps toxins. This chain is Synergistic-type venom protein C9S3, chain 2, found in Dendroaspis angusticeps (Eastern green mamba).